The sequence spans 431 residues: Cleavage stimulation factor subunit 1 (431 aa).

WD repeat units follow at residues 106–145, 171–210, 215–254, 260–301, 303–343, and 395–431; these read SHKG…AKSA, DHVD…AKRA, QEAE…CFVS, QHTD…TTFE, AHDG…TLVR, and GHNN…STTD.

In terms of assembly, homodimer. The CSTF complex is composed of CSTF1 (50 kDa subunit), CSTF2 (64 kDa subunit) and CSTF3 (77 kDa subunit). Interacts (via repeats WD) directly with CSTF3. Interacts (via repeat WD6) with BARD1. Interacts with ERCC6.

The protein localises to the nucleus. Functionally, one of the multiple factors required for polyadenylation and 3'-end cleavage of mammalian pre-mRNAs. May be responsible for the interaction of CSTF with other factors to form a stable complex on the pre-mRNA. The sequence is that of Cleavage stimulation factor subunit 1 (Cstf1) from Mus musculus (Mouse).